Here is a 124-residue protein sequence, read N- to C-terminus: Small ribosomal subunit protein uS13 (124 aa).

The tract at residues 95–124 (GLPVRGQRTKTNARTRKGPKRTIAGKKKAR) is disordered.

Belongs to the universal ribosomal protein uS13 family. Part of the 30S ribosomal subunit. Forms a loose heterodimer with protein S19. Forms two bridges to the 50S subunit in the 70S ribosome.

Functionally, located at the top of the head of the 30S subunit, it contacts several helices of the 16S rRNA. In the 70S ribosome it contacts the 23S rRNA (bridge B1a) and protein L5 of the 50S subunit (bridge B1b), connecting the 2 subunits; these bridges are implicated in subunit movement. Contacts the tRNAs in the A and P-sites. The sequence is that of Small ribosomal subunit protein uS13 from Mycobacterium sp. (strain JLS).